A 218-amino-acid polypeptide reads, in one-letter code: 2-phospho-L-lactate guanylyltransferase (218 aa).

It belongs to the CofC family. In terms of assembly, homodimer.

It catalyses the reaction (2S)-2-phospholactate + GTP + H(+) = (2S)-lactyl-2-diphospho-5'-guanosine + diphosphate. It functions in the pathway cofactor biosynthesis; coenzyme F420 biosynthesis. Functionally, guanylyltransferase that catalyzes the activation of (2S)-2-phospholactate (2-PL) as (2S)-lactyl-2-diphospho-5'-guanosine, via the condensation of 2-PL with GTP. It is involved in the biosynthesis of coenzyme F420, a hydride carrier cofactor. The sequence is that of 2-phospho-L-lactate guanylyltransferase from Methanocaldococcus fervens (strain DSM 4213 / JCM 15782 / AG86) (Methanococcus fervens).